A 280-amino-acid polypeptide reads, in one-letter code: Aspartate/glutamate leucyltransferase (280 aa).

It belongs to the R-transferase family. Bpt subfamily.

The protein localises to the cytoplasm. It carries out the reaction N-terminal L-glutamyl-[protein] + L-leucyl-tRNA(Leu) = N-terminal L-leucyl-L-glutamyl-[protein] + tRNA(Leu) + H(+). It catalyses the reaction N-terminal L-aspartyl-[protein] + L-leucyl-tRNA(Leu) = N-terminal L-leucyl-L-aspartyl-[protein] + tRNA(Leu) + H(+). Functions in the N-end rule pathway of protein degradation where it conjugates Leu from its aminoacyl-tRNA to the N-termini of proteins containing an N-terminal aspartate or glutamate. In Cereibacter sphaeroides (strain KD131 / KCTC 12085) (Rhodobacter sphaeroides), this protein is Aspartate/glutamate leucyltransferase.